Consider the following 217-residue polypeptide: tRNA (guanine-N(7)-)-methyltransferase (217 aa).

S-adenosyl-L-methionine is bound by residues Glu44, Glu69, Asn96, and Asp118. Asp118 is a catalytic residue. Lys122 provides a ligand contact to substrate. Residues 124–129 are interaction with RNA; the sequence is RHEKRR. Residues Asp154 and 191–194 contribute to the substrate site; that span reads TEYE.

Belongs to the class I-like SAM-binding methyltransferase superfamily. TrmB family.

It carries out the reaction guanosine(46) in tRNA + S-adenosyl-L-methionine = N(7)-methylguanosine(46) in tRNA + S-adenosyl-L-homocysteine. It functions in the pathway tRNA modification; N(7)-methylguanine-tRNA biosynthesis. In terms of biological role, catalyzes the formation of N(7)-methylguanine at position 46 (m7G46) in tRNA. This Geobacillus kaustophilus (strain HTA426) protein is tRNA (guanine-N(7)-)-methyltransferase.